Reading from the N-terminus, the 968-residue chain is RNA polymerase-associated protein RapA (968 aa).

One can recognise a Helicase ATP-binding domain in the interval 164-334 (DVGRRHAPRV…FARLRLLDPN (171 aa)). Residue 177-184 (DEVGLGKT) coordinates ATP. Positions 280-283 (DEAH) match the DEAH box motif. A Helicase C-terminal domain is found at 490–662 (RVEWLMGYLT…YLASPDETEG (173 aa)).

The protein belongs to the SNF2/RAD54 helicase family. RapA subfamily. In terms of assembly, interacts with the RNAP. Has a higher affinity for the core RNAP than for the holoenzyme. Its ATPase activity is stimulated by binding to RNAP.

Functionally, transcription regulator that activates transcription by stimulating RNA polymerase (RNAP) recycling in case of stress conditions such as supercoiled DNA or high salt concentrations. Probably acts by releasing the RNAP, when it is trapped or immobilized on tightly supercoiled DNA. Does not activate transcription on linear DNA. Probably not involved in DNA repair. In Escherichia coli O81 (strain ED1a), this protein is RNA polymerase-associated protein RapA.